Consider the following 213-residue polypeptide: Protein-L-isoaspartate O-methyltransferase (213 aa).

Residue S61 is part of the active site.

The protein belongs to the methyltransferase superfamily. L-isoaspartyl/D-aspartyl protein methyltransferase family.

Its subcellular location is the cytoplasm. It catalyses the reaction [protein]-L-isoaspartate + S-adenosyl-L-methionine = [protein]-L-isoaspartate alpha-methyl ester + S-adenosyl-L-homocysteine. Functionally, catalyzes the methyl esterification of L-isoaspartyl residues in peptides and proteins that result from spontaneous decomposition of normal L-aspartyl and L-asparaginyl residues. It plays a role in the repair and/or degradation of damaged proteins. This Petrotoga mobilis (strain DSM 10674 / SJ95) protein is Protein-L-isoaspartate O-methyltransferase.